Reading from the N-terminus, the 712-residue chain is Nucleolin (712 aa).

A disordered region spans residues 1-305 (MVKLAKAGKN…KKQKVEGTEP (305 aa)). N6-acetyllysine occurs at positions 9, 15, and 16. Acidic residues predominate over residues 24–43 (VEEDSEDEEMSEDEEDDSSG). Residues Ser-28, Ser-34, Ser-41, and Ser-42 each carry the phosphoserine modification. Residues 56 to 107 (AAATSAKKVVVSPTKKVAVATPAKKAAVTPGKKAAATPAKKTVTPAKAVTTP) show a composition bias toward low complexity. Repeat unit 1 spans residues 58 to 65 (ATSAKKVV). Residues 58-135 (ATSAKKVVVS…GAAIPAKGAK (78 aa)) are 8 X 8 AA tandem repeats of X-T-P-X-K-K-X-X. Ser-67 carries the post-translational modification Phosphoserine. A phosphothreonine mark is found at Thr-69, Thr-76, Thr-84, and Thr-92. A run of 3 repeats spans residues 75-82 (ATPAKKAA), 83-90 (VTPGKKAA), and 91-98 (ATPAKKTV). Lys-96 is subject to N6-acetyllysine. Thr-99 is subject to Phosphothreonine. The 5; truncated repeat unit spans residues 99–104 (TPAKAV). Lys-102 carries the N6-acetyllysine modification. Repeat 6 spans residues 105 to 112 (TTPGKKGA). Thr-106 is subject to Phosphothreonine. The residue at position 109 (Lys-109) is an N6-acetyllysine. Thr-113 carries the phosphothreonine modification. N6-acetyllysine is present on Lys-116. 2 consecutive repeat copies span residues 120–127 (ATPGKKGA) and 128–135 (AIPAKGAK). Thr-121 carries the phosphothreonine modification. A compositionally biased stretch (low complexity) spans 122–137 (PGKKGAAIPAKGAKNG). At Lys-124 the chain carries N6-acetyllysine. Ser-145 and Ser-153 each carry phosphoserine. Residues 145–171 (SDEEEEDDSEEDEDDDEDEDEDEDEIE) show a composition bias toward acidic residues. Residues 172–183 (PAAMKAAAAAPA) are compositionally biased toward low complexity. Phosphoserine is present on residues Ser-184 and Ser-206. Over residues 184–211 (SEDEDDEDDEDDEDEDDDEEDDSEEEAM) the composition is skewed to acidic residues. Residue Thr-214 is modified to Phosphothreonine. Residues 234–274 (EDEDEEEDDEDEDDDDDDDDDDEDDEDEDDEEEEEEEEEEP) are compositionally biased toward acidic residues. Over residues 275-302 (VKEAPGKRKKEMAKQKAAPEAKKQKVEG) the composition is skewed to basic and acidic residues. Lys-299 is covalently cross-linked (Glycyl lysine isopeptide (Lys-Gly) (interchain with G-Cter in SUMO1); alternate). Residue Lys-299 forms a Glycyl lysine isopeptide (Lys-Gly) (interchain with G-Cter in SUMO2); alternate linkage. A Phosphothreonine modification is found at Thr-303. 2 RRM domains span residues 309–385 (FNLF…KPKG) and 395–468 (RTLL…YTGE). Residue Lys-320 is modified to N6-acetyllysine. A Glycyl lysine isopeptide (Lys-Gly) (interchain with G-Cter in SUMO1); alternate cross-link involves residue Lys-326. Lys-326 is covalently cross-linked (Glycyl lysine isopeptide (Lys-Gly) (interchain with G-Cter in SUMO2); alternate). An N6-acetyllysine modification is found at Lys-350. Phosphoserine is present on Ser-358. The residue at position 369 (Thr-369) is a Phosphothreonine. Lys-372 is covalently cross-linked (Glycyl lysine isopeptide (Lys-Gly) (interchain with G-Cter in SUMO2)). Residue Lys-379 forms a Glycyl lysine isopeptide (Lys-Gly) (interchain with G-Cter in SUMO2); alternate linkage. Lys-379 carries the post-translational modification N6-acetyllysine; alternate. Lys-400 and Lys-405 each carry N6-acetyllysine. Phosphothreonine is present on Thr-407. An N6-acetyllysine mark is found at Lys-429 and Lys-446. A phosphoserine mark is found at Ser-460 and Ser-462. Lys-469 and Lys-479 each carry N6-acetyllysine. Residues 488 to 562 (KTLVLSNLSY…RAIRLELQGP (75 aa)) form the RRM 3 domain. A Glycyl lysine isopeptide (Lys-Gly) (interchain with G-Cter in SUMO2); alternate cross-link involves residue Lys-515. Residue Lys-515 is modified to N6-acetyllysine; alternate. Lys-523 carries the post-translational modification N6-acetyllysine. A Phosphoserine modification is found at Ser-565. At Lys-574 the chain carries N6-acetyllysine. Positions 574–649 (KTLFVKGLSE…NKVTLDWAKP (76 aa)) constitute an RRM 4 domain. A Glycyl lysine isopeptide (Lys-Gly) (interchain with G-Cter in SUMO2); alternate cross-link involves residue Lys-579. At Lys-579 the chain carries N6-acetyllysine; alternate. The residue at position 582 (Ser-582) is a Phosphoserine. Lys-591 participates in a covalent cross-link: Glycyl lysine isopeptide (Lys-Gly) (interchain with G-Cter in SUMO1); alternate. Residue Lys-591 forms a Glycyl lysine isopeptide (Lys-Gly) (interchain with G-Cter in SUMO2); alternate linkage. Residues Ser-593 and Ser-621 each carry the phosphoserine modification. Lys-626 is covalently cross-linked (Glycyl lysine isopeptide (Lys-Gly) (interchain with G-Cter in SUMO2)). The tract at residues 642–712 (VTLDWAKPKG…KPQGKKTKFE (71 aa)) is disordered. N6-acetyllysine is present on Lys-648. The segment covering 652–698 (EGGFGGRGGGRGGFGGRGGGRGGRGGFGGRGRGGFGGRGGFRGGRGG) has biased composition (gly residues). Asymmetric dimethylarginine is present on residues Arg-658, Arg-662, Arg-668, Arg-672, Arg-675, Arg-681, Arg-683, Arg-689, and Arg-693. At Arg-696 the chain carries Asymmetric dimethylarginine; alternate. Arg-696 bears the Omega-N-methylarginine; alternate mark. The span at 699–712 (GGDHKPQGKKTKFE) shows a compositional bias: basic and acidic residues.

As to quaternary structure, identified in a IGF2BP1-dependent mRNP granule complex containing untranslated mRNAs. Component of the SWAP complex that consists of NPM1, NCL/nucleolin, PARP1 and SWAP70. Component of a complex which is at least composed of HTATSF1/Tat-SF1, the P-TEFb complex components CDK9 and CCNT1, RNA polymerase II, SUPT5H, and NCL/nucleolin. Interacts with AICDA. Interacts with APTX. Interacts with C1QBP. Interacts with ERBB4. Interacts (via C-terminus) with FMR1 isoform 6 (via N-terminus). Interacts with GZF1; this interaction is important for nucleolar localization of GZF1. Interacts with NSUN2. Interacts with NVL. Interacts (via N-terminus domain) with SETX. Interacts (via RRM1 and C-terminal RRM4/Arg/Gly-rich domains) with TERT; the interaction is important for nucleolar localization of TERT. Interacts with WDR46. Interacts with ZFP36. Interacts with LRRC34. Interacts with RRP1B. Interacts with HNRNPU; this interaction occurs during mitosis. Interacts with RIOK1; RIOK1 recruits NCL to the PRMT5 for symmetrically methylation. Interacts with ZBTB7B. Interacts with MDK; this interaction promotes NCL clustering and lateral movements of this complex into lipid rafts leading to MDK internalization. Interacts with HDGF. Interacts with ALKBH2. Interacts with IGFBP5; this interaction is necessary for IGFBP5 localization to the nucleus. Interacts with DDX24 (when ubiquitinated); this interaction may be important during ribosome biogenesis. In terms of processing, some glutamate residues are glycylated by TTLL8. This modification occurs exclusively on glutamate residues and results in a glycine chain on the gamma-carboxyl group. Symmetrically methylated by PRMT5.

The protein localises to the nucleus. It is found in the nucleolus. Its subcellular location is the cytoplasm. Nucleolin is the major nucleolar protein of growing eukaryotic cells. It is found associated with intranucleolar chromatin and pre-ribosomal particles. It induces chromatin decondensation by binding to histone H1. It is thought to play a role in pre-rRNA transcription and ribosome assembly. May play a role in the process of transcriptional elongation. Binds RNA oligonucleotides with 5'-UUAGGG-3' repeats more tightly than the telomeric single-stranded DNA 5'-TTAGGG-3' repeats. This is Nucleolin (NCL) from Pongo abelii (Sumatran orangutan).